Reading from the N-terminus, the 224-residue chain is tRNA (guanine-N(7)-)-methyltransferase (224 aa).

S-adenosyl-L-methionine contacts are provided by Glu-54, Glu-79, Asp-106, and Asp-129. The active site involves Asp-129. Substrate contacts are provided by Lys-133 and Asp-165.

It belongs to the class I-like SAM-binding methyltransferase superfamily. TrmB family.

It carries out the reaction guanosine(46) in tRNA + S-adenosyl-L-methionine = N(7)-methylguanosine(46) in tRNA + S-adenosyl-L-homocysteine. It participates in tRNA modification; N(7)-methylguanine-tRNA biosynthesis. In terms of biological role, catalyzes the formation of N(7)-methylguanine at position 46 (m7G46) in tRNA. This chain is tRNA (guanine-N(7)-)-methyltransferase, found in Chlamydia felis (strain Fe/C-56) (Chlamydophila felis).